A 214-amino-acid chain; its full sequence is Small ribosomal subunit protein eS6 (214 aa).

The protein belongs to the eukaryotic ribosomal protein eS6 family.

This Saccharolobus islandicus (strain L.S.2.15 / Lassen #1) (Sulfolobus islandicus) protein is Small ribosomal subunit protein eS6.